Here is a 166-residue protein sequence, read N- to C-terminus: Crossover junction endodeoxyribonuclease RuvC (166 aa).

Residues aspartate 7, glutamate 67, and aspartate 139 contribute to the active site. Positions 7, 67, and 139 each coordinate Mg(2+).

Belongs to the RuvC family. As to quaternary structure, homodimer which binds Holliday junction (HJ) DNA. The HJ becomes 2-fold symmetrical on binding to RuvC with unstacked arms; it has a different conformation from HJ DNA in complex with RuvA. In the full resolvosome a probable DNA-RuvA(4)-RuvB(12)-RuvC(2) complex forms which resolves the HJ. Requires Mg(2+) as cofactor.

The protein resides in the cytoplasm. The catalysed reaction is Endonucleolytic cleavage at a junction such as a reciprocal single-stranded crossover between two homologous DNA duplexes (Holliday junction).. In terms of biological role, the RuvA-RuvB-RuvC complex processes Holliday junction (HJ) DNA during genetic recombination and DNA repair. Endonuclease that resolves HJ intermediates. Cleaves cruciform DNA by making single-stranded nicks across the HJ at symmetrical positions within the homologous arms, yielding a 5'-phosphate and a 3'-hydroxyl group; requires a central core of homology in the junction. The consensus cleavage sequence is 5'-(A/T)TT(C/G)-3'. Cleavage occurs on the 3'-side of the TT dinucleotide at the point of strand exchange. HJ branch migration catalyzed by RuvA-RuvB allows RuvC to scan DNA until it finds its consensus sequence, where it cleaves and resolves the cruciform DNA. This chain is Crossover junction endodeoxyribonuclease RuvC, found in Paramagnetospirillum magneticum (strain ATCC 700264 / AMB-1) (Magnetospirillum magneticum).